Reading from the N-terminus, the 155-residue chain is Small ribosomal subunit protein bS16 (155 aa).

The segment at 113 to 155 is disordered; the sequence is ADGAPTGEAIQQKKKKAPKKAEAAEAEAPAEEPAAESADAASE. The segment covering 136–146 has biased composition (acidic residues); sequence AEAEAPAEEPA.

It belongs to the bacterial ribosomal protein bS16 family.

The sequence is that of Small ribosomal subunit protein bS16 from Mycobacteroides abscessus (strain ATCC 19977 / DSM 44196 / CCUG 20993 / CIP 104536 / JCM 13569 / NCTC 13031 / TMC 1543 / L948) (Mycobacterium abscessus).